The sequence spans 276 residues: Outer membrane lipoprotein 2 (276 aa).

An N-terminal signal peptide occupies residues 1–19; the sequence is MNFKKLLGVALVSALALTA. Cys-20 carries the N-palmitoyl cysteine lipid modification. Cys-20 is lipidated: S-diacylglycerol cysteine.

It belongs to the NlpA lipoprotein family.

The protein resides in the cell outer membrane. The sequence is that of Outer membrane lipoprotein 2 (plpB) from Mannheimia haemolytica (Pasteurella haemolytica).